The sequence spans 940 residues: Protein translocase subunit SecA (940 aa).

Residues Gln-85, 103-107 (GEGKT), and Asp-505 contribute to the ATP site. The segment at 851–940 (PVQDGAERPS…KGGGGRRRKK (90 aa)) is disordered. The span at 855–865 (GAERPSLEKEG) shows a compositional bias: basic and acidic residues. The span at 928-940 (RRRKGGGGRRRKK) shows a compositional bias: basic residues.

This sequence belongs to the SecA family. As to quaternary structure, monomer and homodimer. Part of the essential Sec protein translocation apparatus which comprises SecA, SecYEG and auxiliary proteins SecDF. Other proteins may also be involved.

It localises to the cell membrane. Its subcellular location is the cytoplasm. The enzyme catalyses ATP + H2O + cellular proteinSide 1 = ADP + phosphate + cellular proteinSide 2.. Its function is as follows. Part of the Sec protein translocase complex. Interacts with the SecYEG preprotein conducting channel. Has a central role in coupling the hydrolysis of ATP to the transfer of proteins into and across the cell membrane, serving as an ATP-driven molecular motor driving the stepwise translocation of polypeptide chains across the membrane. In Streptomyces griseus, this protein is Protein translocase subunit SecA.